Reading from the N-terminus, the 63-residue chain is DNA-directed RNA polymerases I, II, and III subunit RPABC4 (63 aa).

Zn(2+) is bound by residues cysteine 24, cysteine 27, cysteine 41, and cysteine 44. A C4-type zinc finger spans residues 24-44 (CADCGARNTIQAKEVIRCREC).

This sequence belongs to the archaeal Rpo12/eukaryotic RPC10 RNA polymerase subunit family. In terms of assembly, component of the RNA polymerase I (Pol I), RNA polymerase II (Pol II) and RNA polymerase III (Pol III) complexes consisting of 14, 12 and 17 subunits, respectively.

The protein resides in the nucleus. In terms of biological role, DNA-dependent RNA polymerase catalyzes the transcription of DNA into RNA using the four ribonucleoside triphosphates as substrates. Common component of RNA polymerases I, II and III which synthesize ribosomal RNA precursors, mRNA precursors and many functional non-coding RNAs, and a small RNAs, such as 5S rRNA and tRNAs, respectively. This chain is DNA-directed RNA polymerases I, II, and III subunit RPABC4 (rpc10), found in Schizosaccharomyces pombe (strain 972 / ATCC 24843) (Fission yeast).